A 241-amino-acid chain; its full sequence is tRNA pseudouridine synthase B (241 aa).

Residue Asp45 is the Nucleophile of the active site.

The protein belongs to the pseudouridine synthase TruB family. Type 1 subfamily.

It catalyses the reaction uridine(55) in tRNA = pseudouridine(55) in tRNA. Functionally, responsible for synthesis of pseudouridine from uracil-55 in the psi GC loop of transfer RNAs. This chain is tRNA pseudouridine synthase B, found in Opitutus terrae (strain DSM 11246 / JCM 15787 / PB90-1).